Here is a 227-residue protein sequence, read N- to C-terminus: uncharacterized protein (227 aa).

A run of 7 helical transmembrane segments spans residues Phe15–Tyr34, Thr55–Val77, Ala92–Leu114, Phe121–Leu140, Leu145–Ser167, Pro180–Leu202, and Phe206–Leu224.

The protein localises to the cell membrane. This is an uncharacterized protein from Archaeoglobus fulgidus (strain ATCC 49558 / DSM 4304 / JCM 9628 / NBRC 100126 / VC-16).